The sequence spans 369 residues: DNA replication and repair protein RecF (369 aa).

An ATP-binding site is contributed by Gly-30–Thr-37.

The protein belongs to the RecF family.

The protein resides in the cytoplasm. In terms of biological role, the RecF protein is involved in DNA metabolism; it is required for DNA replication and normal SOS inducibility. RecF binds preferentially to single-stranded, linear DNA. It also seems to bind ATP. The polypeptide is DNA replication and repair protein RecF (Streptococcus agalactiae serotype Ia (strain ATCC 27591 / A909 / CDC SS700)).